Consider the following 524-residue polypeptide: Probable glycine dehydrogenase (decarboxylating) subunit 2 (524 aa).

The residue at position 296 (Lys296) is an N6-(pyridoxal phosphate)lysine.

Belongs to the GcvP family. C-terminal subunit subfamily. As to quaternary structure, the glycine cleavage system is composed of four proteins: P, T, L and H. In this organism, the P 'protein' is a heterodimer of two subunits. Pyridoxal 5'-phosphate is required as a cofactor.

It catalyses the reaction N(6)-[(R)-lipoyl]-L-lysyl-[glycine-cleavage complex H protein] + glycine + H(+) = N(6)-[(R)-S(8)-aminomethyldihydrolipoyl]-L-lysyl-[glycine-cleavage complex H protein] + CO2. Its function is as follows. The glycine cleavage system catalyzes the degradation of glycine. The P protein binds the alpha-amino group of glycine through its pyridoxal phosphate cofactor; CO(2) is released and the remaining methylamine moiety is then transferred to the lipoamide cofactor of the H protein. This Caulobacter vibrioides (strain ATCC 19089 / CIP 103742 / CB 15) (Caulobacter crescentus) protein is Probable glycine dehydrogenase (decarboxylating) subunit 2.